The primary structure comprises 476 residues: Cytochrome c oxidase subunit 1 (476 aa).

A helical membrane pass occupies residues 19-39 (LYYLWFSFLFGSYGFLLSVIL). Residue glutamate 42 coordinates Ca(2+). The next 8 helical transmembrane spans lie at 61–81 (MIFT…GLFG), 105–125 (ISLL…AAEF), 151–171 (VIIF…LNFI), 194–214 (LIIT…GVLM), 240–260 (LFWF…FGVI), 278–298 (MILA…HHMY), 310–330 (FTST…NWIC), and 345–365 (LLSL…VILG). Histidine 66 is a Fe(II)-heme a binding site. A Cu cation-binding site is contributed by histidine 246. The segment at residues 246–250 (HPEVY) is a cross-link (1'-histidyl-3'-tyrosine (His-Tyr)). Tyrosine 250 lines the O2 pocket. 2 residues coordinate Cu cation: histidine 295 and histidine 296. 2 residues coordinate Mg(2+): histidine 374 and aspartate 375. The next 2 helical transmembrane spans lie at 379–399 (VIAH…FTTV) and 415–435 (SIVI…FLPM). Histidine 382 contacts heme a3. Histidine 384 lines the Fe(II)-heme a pocket. Proline 448 lines the Ca(2+) pocket. A helical membrane pass occupies residues 455 to 475 (NGWNMICSIGSTMTLFGLLIF).

This sequence belongs to the heme-copper respiratory oxidase family. Component of the cytochrome c oxidase (complex IV, CIV), a multisubunit enzyme composed of a catalytic core of 3 subunits and several supernumerary subunits. The complex exists as a monomer or a dimer and forms supercomplexes (SCs) in the inner mitochondrial membrane with ubiquinol-cytochrome c oxidoreductase (cytochrome b-c1 complex, complex III, CIII). Heme is required as a cofactor. Cu cation serves as cofactor.

It localises to the mitochondrion inner membrane. It catalyses the reaction 4 Fe(II)-[cytochrome c] + O2 + 8 H(+)(in) = 4 Fe(III)-[cytochrome c] + 2 H2O + 4 H(+)(out). It functions in the pathway energy metabolism; oxidative phosphorylation. In terms of biological role, component of the cytochrome c oxidase, the last enzyme in the mitochondrial electron transport chain which drives oxidative phosphorylation. The respiratory chain contains 3 multisubunit complexes succinate dehydrogenase (complex II, CII), ubiquinol-cytochrome c oxidoreductase (cytochrome b-c1 complex, complex III, CIII) and cytochrome c oxidase (complex IV, CIV), that cooperate to transfer electrons derived from NADH and succinate to molecular oxygen, creating an electrochemical gradient over the inner membrane that drives transmembrane transport and the ATP synthase. Cytochrome c oxidase is the component of the respiratory chain that catalyzes the reduction of oxygen to water. Electrons originating from reduced cytochrome c in the intermembrane space (IMS) are transferred via the dinuclear copper A center (CU(A)) of subunit 2 and heme A of subunit 1 to the active site in subunit 1, a binuclear center (BNC) formed by heme A3 and copper B (CU(B)). The BNC reduces molecular oxygen to 2 water molecules using 4 electrons from cytochrome c in the IMS and 4 protons from the mitochondrial matrix. The polypeptide is Cytochrome c oxidase subunit 1 (MT-CO1) (Plasmodium falciparum).